The sequence spans 157 residues: Alanyl-tRNA editing protein AlaX-S (157 aa).

H9, H13, C116, and H120 together coordinate Zn(2+).

Belongs to the class-II aminoacyl-tRNA synthetase family. Editing domain AlaX-S subfamily. As to quaternary structure, monomer and homodimer; the dimer is less active in tRNA editing and does not have a zinc ion associated with it. Another report shows only a monomeric form. Zn(2+) is required as a cofactor.

It is found in the cytoplasm. Functionally, functions in trans to edit the amino acid moiety from mischarged charged Ser-tRNA(Ala). Has little activity against Gly-tRNA(Ala). The polypeptide is Alanyl-tRNA editing protein AlaX-S (alaXS) (Pyrococcus horikoshii (strain ATCC 700860 / DSM 12428 / JCM 9974 / NBRC 100139 / OT-3)).